The chain runs to 469 residues: Beta-1,3-xylanase (469 aa).

An N-terminal signal peptide occupies residues 1 to 22; that stretch reads MKKLAKMISIATLGACAFSAHA. A GH26 domain is found at 23–293; the sequence is LDGKLVPNEG…LKGFTYINAD (271 aa). The active-site Proton donor is the Glu138. The active-site Nucleophile is the Glu234. A compositionally biased stretch (gly residues) spans 352 to 374; sequence DNGGDNGGDNGGDNGGDNGGDNG. Positions 352 to 380 are disordered; sequence DNGGDNGGDNGGDNGGDNGGDNGGTEPPE. The interval 377 to 469 is carbohydrate binding module (CBM); sequence EPPENCQDDF…NITFTTQVCN (93 aa). 2 disulfide bridges follow: Cys382/Cys468 and Cys413/Cys418.

It belongs to the glycosyl hydrolase 26 family.

It catalyses the reaction Random hydrolysis of (1-&gt;3)-beta-D-glycosidic linkages in (1-&gt;3)-beta-D-xylans.. With respect to regulation, completely inhibited by CuCl(2), FeCl(3), HgCl(2) and N-bromosuccinimide. Moderately inhibited by AgCl, AlCl(3), Pb(CH(3)COO)(2) and dithiothreitol. BaCl(2), CaCl(2), KCl, MgCl(2), MnCl(2), NaCl, ZnCl(2), ethylenediaminetetraacetic acid, N-ethylmaleimide, iodoacetic acid and p-chloromercuribenzoic acid have little or no effect on activity. In terms of biological role, catalyzes the hydrolysis of beta-1,3-xylan into oligosaccharides, mainly xylotriose and xylobiose with smaller amounts of xylotetraose, xylose, xylopentaose and xylohexaose. Does not hydrolyze xylobiose, p-nitrophenyl-beta-xyloside, beta-1,4-xylan, carboxymethylcellulose, curdlan, glucomannan or beta-1,4-mannan. The sequence is that of Beta-1,3-xylanase from Alcaligenes sp.